We begin with the raw amino-acid sequence, 482 residues long: Serine carboxypeptidase-like 36 (482 aa).

Positions 1–25 (MGKRQDWSVTACIFLFLSLASQIHC) are cleaved as a signal peptide. 3 cysteine pairs are disulfide-bonded: Cys119/Cys363, Cys275/Cys286, and Cys310/Cys331. Ser210 is a catalytic residue. An N-linked (GlcNAc...) asparagine glycan is attached at Asn228. N-linked (GlcNAc...) asparagine glycosylation is found at Asn312 and Asn352. Asp402 is a catalytic residue. N-linked (GlcNAc...) asparagine glycans are attached at residues Asn418 and Asn444. Residue His455 is part of the active site.

It belongs to the peptidase S10 family. In terms of tissue distribution, expressed in seedlings, flowers and siliques.

It localises to the secreted. In terms of biological role, probable carboxypeptidase. The chain is Serine carboxypeptidase-like 36 (SCPL36) from Arabidopsis thaliana (Mouse-ear cress).